The primary structure comprises 185 residues: Large ribosomal subunit protein uL5 (185 aa).

It belongs to the universal ribosomal protein uL5 family. Part of the 50S ribosomal subunit; part of the 5S rRNA/L5/L18/L25 subcomplex. Contacts the 5S rRNA and the P site tRNA. Forms a bridge to the 30S subunit in the 70S ribosome.

Its function is as follows. This is one of the proteins that bind and probably mediate the attachment of the 5S RNA into the large ribosomal subunit, where it forms part of the central protuberance. In the 70S ribosome it contacts protein S13 of the 30S subunit (bridge B1b), connecting the 2 subunits; this bridge is implicated in subunit movement. Contacts the P site tRNA; the 5S rRNA and some of its associated proteins might help stabilize positioning of ribosome-bound tRNAs. In Treponema pallidum (strain Nichols), this protein is Large ribosomal subunit protein uL5.